Reading from the N-terminus, the 310-residue chain is Ribose-phosphate pyrophosphokinase (310 aa).

Residues 34–36 (DQE) and 93–94 (RQ) each bind ATP. Positions 127 and 167 each coordinate Mg(2+). Residue Lys-190 is part of the active site. Residues Arg-192, Asp-216, and 220-224 (DSGGT) each bind D-ribose 5-phosphate.

The protein belongs to the ribose-phosphate pyrophosphokinase family. Class I subfamily. In terms of assembly, homohexamer. Mg(2+) is required as a cofactor.

The protein resides in the cytoplasm. The enzyme catalyses D-ribose 5-phosphate + ATP = 5-phospho-alpha-D-ribose 1-diphosphate + AMP + H(+). The protein operates within metabolic intermediate biosynthesis; 5-phospho-alpha-D-ribose 1-diphosphate biosynthesis; 5-phospho-alpha-D-ribose 1-diphosphate from D-ribose 5-phosphate (route I): step 1/1. In terms of biological role, involved in the biosynthesis of the central metabolite phospho-alpha-D-ribosyl-1-pyrophosphate (PRPP) via the transfer of pyrophosphoryl group from ATP to 1-hydroxyl of ribose-5-phosphate (Rib-5-P). In Brucella melitensis biotype 1 (strain ATCC 23456 / CCUG 17765 / NCTC 10094 / 16M), this protein is Ribose-phosphate pyrophosphokinase.